We begin with the raw amino-acid sequence, 147 residues long: uncharacterized protein (147 aa).

The CMP/dCMP-type deaminase domain maps to 4–120 (KWAKRFFQMA…EQTEDFLSRW (117 aa)). A Zn(2+)-binding site is contributed by H67. The active-site Proton donor is E69. 2 residues coordinate Zn(2+): C92 and C95.

Belongs to the cytidine and deoxycytidylate deaminase family. It depends on Zn(2+) as a cofactor.

This is an uncharacterized protein from Aliivibrio fischeri (Vibrio fischeri).